The primary structure comprises 42 residues: Photosystem II reaction center protein J (42 aa).

The helical transmembrane segment at Leu12 to Tyr32 threads the bilayer.

It belongs to the PsbJ family. PSII is composed of 1 copy each of membrane proteins PsbA, PsbB, PsbC, PsbD, PsbE, PsbF, PsbH, PsbI, PsbJ, PsbK, PsbL, PsbM, PsbT, PsbX, PsbY, PsbZ, Psb30/Ycf12, at least 3 peripheral proteins of the oxygen-evolving complex and a large number of cofactors. It forms dimeric complexes.

It localises to the plastid. The protein localises to the chloroplast thylakoid membrane. Functionally, one of the components of the core complex of photosystem II (PSII). PSII is a light-driven water:plastoquinone oxidoreductase that uses light energy to abstract electrons from H(2)O, generating O(2) and a proton gradient subsequently used for ATP formation. It consists of a core antenna complex that captures photons, and an electron transfer chain that converts photonic excitation into a charge separation. In Nephroselmis olivacea (Green alga), this protein is Photosystem II reaction center protein J.